Reading from the N-terminus, the 327-residue chain is Glycerol-3-phosphate dehydrogenase [NAD(P)+] (327 aa).

3 residues coordinate NADPH: phenylalanine 13, arginine 34, and lysine 107. 2 residues coordinate sn-glycerol 3-phosphate: lysine 107 and glycine 135. Alanine 139 is an NADPH binding site. The sn-glycerol 3-phosphate site is built by lysine 190, aspartate 243, serine 253, arginine 254, and asparagine 255. Residue lysine 190 is the Proton acceptor of the active site. Arginine 254 serves as a coordination point for NADPH. Valine 276 and glutamate 277 together coordinate NADPH.

The protein belongs to the NAD-dependent glycerol-3-phosphate dehydrogenase family.

Its subcellular location is the cytoplasm. It catalyses the reaction sn-glycerol 3-phosphate + NAD(+) = dihydroxyacetone phosphate + NADH + H(+). It carries out the reaction sn-glycerol 3-phosphate + NADP(+) = dihydroxyacetone phosphate + NADPH + H(+). Its pathway is membrane lipid metabolism; glycerophospholipid metabolism. Its function is as follows. Catalyzes the reduction of the glycolytic intermediate dihydroxyacetone phosphate (DHAP) to sn-glycerol 3-phosphate (G3P), the key precursor for phospholipid synthesis. The protein is Glycerol-3-phosphate dehydrogenase [NAD(P)+] of Rhizobium etli (strain ATCC 51251 / DSM 11541 / JCM 21823 / NBRC 15573 / CFN 42).